The chain runs to 885 residues: Eukaryotic translation initiation factor 3 subunit C (885 aa).

The disordered stretch occupies residues Met1 to Val81. Over residues Gly9 to Ser28 the composition is skewed to low complexity. The span at Glu55–Asp76 shows a compositional bias: acidic residues. The 174-residue stretch at Phe624–Gln797 folds into the PCI domain. The disordered stretch occupies residues Leu822–Gln885. A compositionally biased stretch (gly residues) spans Arg855–Gln872.

Belongs to the eIF-3 subunit C family. Component of the eukaryotic translation initiation factor 3 (eIF-3) complex.

It is found in the cytoplasm. Its function is as follows. Component of the eukaryotic translation initiation factor 3 (eIF-3) complex, which is involved in protein synthesis of a specialized repertoire of mRNAs and, together with other initiation factors, stimulates binding of mRNA and methionyl-tRNAi to the 40S ribosome. The eIF-3 complex specifically targets and initiates translation of a subset of mRNAs involved in cell proliferation. This chain is Eukaryotic translation initiation factor 3 subunit C, found in Cryptococcus neoformans var. neoformans serotype D (strain B-3501A) (Filobasidiella neoformans).